A 316-amino-acid chain; its full sequence is Serpentine receptor class gamma-4 (316 aa).

Transmembrane regions (helical) follow at residues 21 to 41, 50 to 70, 99 to 121, 140 to 160, 188 to 208, 229 to 249, and 258 to 278; these read FVYL…IWGT, SFFT…FLDV, IVYP…LSIN, MKKV…NVII, FQII…SITL, TAWI…FAFF, and IFYI…PIVM.

The protein belongs to the nematode receptor-like protein srg family.

It localises to the membrane. In Caenorhabditis elegans, this protein is Serpentine receptor class gamma-4 (srg-4).